Here is a 321-residue protein sequence, read N- to C-terminus: NADH-ubiquinone oxidoreductase chain 1 (321 aa).

8 consecutive transmembrane segments (helical) span residues Ile-7–Met-27, Ile-73–Ile-93, Leu-104–Gly-124, Val-148–Leu-168, His-175–Ala-195, Phe-227–Ile-247, Glu-256–Ile-276, and Leu-297–Ile-317.

It belongs to the complex I subunit 1 family.

Its subcellular location is the mitochondrion inner membrane. It catalyses the reaction a ubiquinone + NADH + 5 H(+)(in) = a ubiquinol + NAD(+) + 4 H(+)(out). In terms of biological role, core subunit of the mitochondrial membrane respiratory chain NADH dehydrogenase (Complex I) that is believed to belong to the minimal assembly required for catalysis. Complex I functions in the transfer of electrons from NADH to the respiratory chain. The immediate electron acceptor for the enzyme is believed to be ubiquinone. The sequence is that of NADH-ubiquinone oxidoreductase chain 1 (MT-ND1) from Varanus dumerilii (Dumeril's monitor).